Reading from the N-terminus, the 203-residue chain is UPF0301 protein Sde_3637 (203 aa).

Belongs to the UPF0301 (AlgH) family.

This is UPF0301 protein Sde_3637 from Saccharophagus degradans (strain 2-40 / ATCC 43961 / DSM 17024).